The primary structure comprises 156 residues: Cellulose synthase operon protein D (156 aa).

The protein operates within glycan metabolism; bacterial cellulose biosynthesis. May have a major role in the perfection of crystallization, involved either in the pore structure itself or in the organization of the pores within the linear array of terminal synthesizing complexes (TCs). This is Cellulose synthase operon protein D from Komagataeibacter xylinus (Gluconacetobacter xylinus).